Reading from the N-terminus, the 467-residue chain is Probable glycerol-3-phosphate dehydrogenase [NAD(+)] 2, cytosolic (467 aa).

Residues 47–52 (GAGAWG), Lys195, and Ala234 contribute to the NAD(+) site. Lys195 contributes to the substrate binding site. Catalysis depends on Lys284, which acts as the Proton acceptor. Arg346 and Gln374 together coordinate NAD(+). 346–347 (RN) contributes to the substrate binding site.

The protein belongs to the NAD-dependent glycerol-3-phosphate dehydrogenase family.

Its subcellular location is the cytoplasm. It localises to the cytosol. The enzyme catalyses sn-glycerol 3-phosphate + NAD(+) = dihydroxyacetone phosphate + NADH + H(+). May be involved in cell redox homeostasis. In Oryza sativa subsp. japonica (Rice), this protein is Probable glycerol-3-phosphate dehydrogenase [NAD(+)] 2, cytosolic.